The chain runs to 957 residues: Glycine dehydrogenase (decarboxylating) (957 aa).

An N6-(pyridoxal phosphate)lysine modification is found at Lys708.

Belongs to the GcvP family. The glycine cleavage system is composed of four proteins: P, T, L and H. Pyridoxal 5'-phosphate serves as cofactor.

The catalysed reaction is N(6)-[(R)-lipoyl]-L-lysyl-[glycine-cleavage complex H protein] + glycine + H(+) = N(6)-[(R)-S(8)-aminomethyldihydrolipoyl]-L-lysyl-[glycine-cleavage complex H protein] + CO2. In terms of biological role, the glycine cleavage system catalyzes the degradation of glycine. The P protein binds the alpha-amino group of glycine through its pyridoxal phosphate cofactor; CO(2) is released and the remaining methylamine moiety is then transferred to the lipoamide cofactor of the H protein. The protein is Glycine dehydrogenase (decarboxylating) of Shigella boydii serotype 18 (strain CDC 3083-94 / BS512).